Reading from the N-terminus, the 325-residue chain is Exogastrula-inducing polypeptide (325 aa).

An N-terminal signal peptide occupies residues 1-19 (MKVSLVLLIAVFGLAMVAA). Positions 20-45 (EETLESKLQMALKSLLQENEELNLEG) are excised as a propeptide. 2 consecutive EGF-like domains span residues 48–91 (TKGG…SSCY) and 107–154 (TVAR…GGCS). 6 disulfide bridges follow: Cys52–Cys65, Cys59–Cys75, Cys77–Cys90, Cys111–Cys124, Cys118–Cys138, and Cys140–Cys153. Positions 160–177 (ELEYLSYVARDVEMEMLA) are excised as a propeptide. The EGF-like 3 domain occupies 180 to 226 (SVYQCNRDTNSCDGFGKCEKSTFGRTTGQYICNCDDGYRNNAYGGCS). 3 cysteine pairs are disulfide-bonded: Cys184–Cys197, Cys191–Cys211, and Cys213–Cys225. A propeptide spanning residues 232–249 (EIEYLSMIARDQELEMQA) is cleaved from the precursor. Residues 252–298 (SLPQCNRDTNYCDGFGQCVKSTFGRTTGQYICSCNDGYENNLYGGCS) form the EGF-like 4 domain. Cystine bridges form between Cys256–Cys269, Cys263–Cys283, and Cys285–Cys297. A propeptide spanning residues 313–325 (MEILRSLANLLEE) is cleaved from the precursor.

It is found in the secreted. It localises to the extracellular space. The protein resides in the extracellular matrix. Functionally, the EGIP peptides are factors effective to extrude the archenteron toward outside of embryos. May have a role in the induction of gastrulation. The sequence is that of Exogastrula-inducing polypeptide from Heliocidaris crassispina (Sea urchin).